We begin with the raw amino-acid sequence, 217 residues long: Peptide methionine sulfoxide reductase MsrA (217 aa).

C56 is an active-site residue.

The protein belongs to the MsrA Met sulfoxide reductase family.

The catalysed reaction is L-methionyl-[protein] + [thioredoxin]-disulfide + H2O = L-methionyl-(S)-S-oxide-[protein] + [thioredoxin]-dithiol. The enzyme catalyses [thioredoxin]-disulfide + L-methionine + H2O = L-methionine (S)-S-oxide + [thioredoxin]-dithiol. In terms of biological role, has an important function as a repair enzyme for proteins that have been inactivated by oxidation. Catalyzes the reversible oxidation-reduction of methionine sulfoxide in proteins to methionine. This chain is Peptide methionine sulfoxide reductase MsrA, found in Rippkaea orientalis (strain PCC 8801 / RF-1) (Cyanothece sp. (strain PCC 8801)).